The chain runs to 199 residues: Outer-membrane lipoprotein LolB (199 aa).

The signal sequence occupies residues 1–28; that stretch reads MSACPAPRSPFRWLHAFTLCLLLAVLAG. The N-palmitoyl cysteine moiety is linked to residue Cys29. The S-diacylglycerol cysteine moiety is linked to residue Cys29.

The protein belongs to the LolB family. In terms of assembly, monomer.

The protein localises to the cell outer membrane. In terms of biological role, plays a critical role in the incorporation of lipoproteins in the outer membrane after they are released by the LolA protein. This Bordetella bronchiseptica (strain ATCC BAA-588 / NCTC 13252 / RB50) (Alcaligenes bronchisepticus) protein is Outer-membrane lipoprotein LolB.